Here is a 352-residue protein sequence, read N- to C-terminus: Gap junction alpha-4 protein (352 aa).

The Cytoplasmic portion of the chain corresponds to 2–23; sequence GDWEFLEKLLDQVQEHSTSIGK. Residues 24-46 traverse the membrane as a helical segment; sequence IWLMVLFIFRILILGLAGESVWG. Topologically, residues 47-76 are extracellular; sequence DEQSDFICNTEQPGCTNVCYDKAFPISHVR. A helical membrane pass occupies residues 77 to 99; the sequence is YWVLQFLFVSTPTLFYLGHVIYL. Residues 100–153 lie on the Cytoplasmic side of the membrane; the sequence is SRREEKLKQKESELRALDDKEQVEQAIAIIEKKKMKLYIQEDGTVKIKGALMCT. Residues 154 to 176 form a helical membrane-spanning segment; sequence YLTSVIFKSLFEAGFLLGQWYLY. At 177–208 the chain is on the extracellular side; that stretch reads GFVMTPIYVCERVPCPHKVDCFVSRPMEKTIF. A helical transmembrane segment spans residues 209–231; that stretch reads IVFMLVVSLISLFLNVLELIHLV. The Cytoplasmic segment spans residues 232-352; it reads CKSMIDTLKK…SSSASKKQYV (121 aa). Residues 330–352 are disordered; it reads KTHSTMEKPSTRASSSASKKQYV. Residues 340–352 are compositionally biased toward polar residues; sequence TRASSSASKKQYV.

This sequence belongs to the connexin family. Alpha-type (group II) subfamily. As to quaternary structure, a connexon is composed of a hexamer of connexins.

The protein localises to the cell membrane. It is found in the cell junction. Its subcellular location is the gap junction. In terms of biological role, one gap junction consists of a cluster of closely packed pairs of transmembrane channels, the connexons, through which materials of low MW diffuse from one cell to a neighboring cell. The chain is Gap junction alpha-4 protein (gja4) from Xenopus tropicalis (Western clawed frog).